Reading from the N-terminus, the 166-residue chain is Photosystem I assembly protein Ycf3 (166 aa).

TPR repeat units lie at residues alanine 35–alanine 68, serine 72–leucine 105, and glycine 120–serine 153.

The protein belongs to the Ycf3 family.

It localises to the plastid. The protein resides in the chloroplast thylakoid membrane. Functionally, essential for the assembly of the photosystem I (PSI) complex. May act as a chaperone-like factor to guide the assembly of the PSI subunits. The polypeptide is Photosystem I assembly protein Ycf3 (Bigelowiella natans (Pedinomonas minutissima)).